The sequence spans 344 residues: 5-formaminoimidazole-4-carboxamide-1-(beta)-D-ribofuranosyl 5'-monophosphate synthetase (344 aa).

The 5-amino-1-(5-phospho-beta-D-ribosyl)imidazole-4-carboxamide site is built by histidine 31 and serine 96. In terms of domain architecture, ATP-grasp spans 130 to 324 (MELLQRAGVP…YFDRPMDMGE (195 aa)). Residues 153-198 (PVIV…VPAY) and glutamate 220 each bind ATP. Residue asparagine 240 participates in 5-amino-1-(5-phospho-beta-D-ribosyl)imidazole-4-carboxamide binding. The Mg(2+) site is built by glutamate 279 and glutamate 292.

This sequence belongs to the phosphohexose mutase family. The cofactor is Mg(2+). It depends on Mn(2+) as a cofactor.

The catalysed reaction is 5-amino-1-(5-phospho-beta-D-ribosyl)imidazole-4-carboxamide + formate + ATP = 5-formamido-1-(5-phospho-D-ribosyl)imidazole-4-carboxamide + ADP + phosphate. The protein operates within purine metabolism; IMP biosynthesis via de novo pathway; 5-formamido-1-(5-phospho-D-ribosyl)imidazole-4-carboxamide from 5-amino-1-(5-phospho-D-ribosyl)imidazole-4-carboxamide (formate route): step 1/1. Catalyzes the ATP- and formate-dependent formylation of 5-aminoimidazole-4-carboxamide-1-beta-d-ribofuranosyl 5'-monophosphate (AICAR) to 5-formaminoimidazole-4-carboxamide-1-beta-d-ribofuranosyl 5'-monophosphate (FAICAR) in the absence of folates. This is 5-formaminoimidazole-4-carboxamide-1-(beta)-D-ribofuranosyl 5'-monophosphate synthetase from Pyrobaculum neutrophilum (strain DSM 2338 / JCM 9278 / NBRC 100436 / V24Sta) (Thermoproteus neutrophilus).